Reading from the N-terminus, the 332-residue chain is Protein FAM9A (332 aa).

Residues 1 to 13 show a composition bias toward basic residues; the sequence is MEPVGRKRSRKAA. Disordered regions lie at residues 1–114 and 186–293; these read MEPV…EHTG and QKDD…PTGV. Basic and acidic residues-rich tracts occupy residues 74-91 and 98-114; these read GKDP…FTET and DEHG…EHTG. A compositionally biased stretch (low complexity) spans 196–217; sequence AAAAAAEAAAAAEAAAAAAEVI. Positions 218–275 are enriched in acidic residues; it reads VVEDEEEEEKEEEEEKEEEEEEGEEEGGGEEGEEGGGGGEGEETEEEEEEEEEEEEEE. The segment covering 276–285 has biased composition (basic and acidic residues); the sequence is QIKAFQEKQK.

Belongs to the XLR/SYCP3 family. In terms of tissue distribution, expressed exclusively in testis.

It is found in the nucleus. The protein resides in the nucleolus. The polypeptide is Protein FAM9A (Homo sapiens (Human)).